Consider the following 78-residue polypeptide: Small integral membrane protein 1 (78 aa).

N-acetylmethionine is present on Met1. Residues 1–18 (MQPQESHVHYSRWEDGSR) show a composition bias toward basic and acidic residues. The interval 1-20 (MQPQESHVHYSRWEDGSRDG) is disordered. Topologically, residues 1–46 (MQPQESHVHYSRWEDGSRDGVSLGAVSSTEEASRCRRISQRLCTGK) are cytoplasmic. A phosphoserine mark is found at Ser6, Ser17, Ser22, and Ser27. Residues 47–67 (LGIAMKVLGGVALFWIIFILG) form a helical; Signal-anchor for type II membrane protein membrane-spanning segment. The Extracellular segment spans residues 68-78 (YLTGYYVHKCK). The interval 68 to 78 (YLTGYYVHKCK) is displays the Vel antigen.

The protein belongs to the SMIM1 family. Homooligomer; disulfide-linked. Highly expressed in the bone marrow and expressed at lower levels in non-hematopoietic tissues. Highly expressed in erythroleukemia cell lines. Up-regulated in CD34+ hematopoietic progenitors cultured toward red blood cells.

It localises to the cell membrane. Its function is as follows. Regulator of red blood cell formation. The polypeptide is Small integral membrane protein 1 (Homo sapiens (Human)).